The following is a 286-amino-acid chain: Phycobilisome 32.1 kDa linker polypeptide, phycocyanin-associated, rod (286 aa).

One can recognise a PBS-linker domain in the interval A2–R180. Residues D234–A286 enclose the CpcD-like domain.

The protein belongs to the phycobilisome linker protein family.

It is found in the cellular thylakoid membrane. In terms of biological role, rod linker protein, associated with phycocyanin. Linker polypeptides determine the state of aggregation and the location of the disk-shaped phycobiliprotein units within the phycobilisome and modulate their spectroscopic properties in order to mediate a directed and optimal energy transfer. The polypeptide is Phycobilisome 32.1 kDa linker polypeptide, phycocyanin-associated, rod (cpcC) (Mastigocladus laminosus (Fischerella sp.)).